The chain runs to 211 residues: Peptidyl-prolyl cis-trans isomerase FKBP14 (211 aa).

An N-terminal signal peptide occupies residues 1-19 (MRFFLWNAILALWVTVLSG). A disulfide bridge connects residues cysteine 38 and cysteine 96. The PPIase FKBP-type domain occupies 45 to 135 (GDLMLVHYEG…IFNIDLLEIR (91 aa)). Positions 135-170 (RNGPRSHESFQEMDLNDDWRLSKHEVKVYLQKEFEK) constitute an EF-hand 1 domain. 5 residues coordinate Ca(2+): aspartate 148, asparagine 150, aspartate 152, arginine 154, and glutamate 159. Asparagine 176 is a glycosylation site (N-linked (GlcNAc...) asparagine). One can recognise an EF-hand 2 domain in the interval 179 to 211 (HHDALVEDIFDKEDEDKDGFISAREFTYVHDEL). Aspartate 192, aspartate 194, aspartate 196, and glutamate 203 together coordinate Ca(2+). Residues 208-211 (HDEL) carry the Prevents secretion from ER motif.

As to quaternary structure, monomer. Homodimer. Interacts with type III, type IV and type X collagens.

The protein resides in the endoplasmic reticulum lumen. It carries out the reaction [protein]-peptidylproline (omega=180) = [protein]-peptidylproline (omega=0). Inhibited by tacrolimus/FK506. Functionally, PPIase which accelerates the folding of proteins during protein synthesis. Has a preference for substrates containing 4-hydroxylproline modifications, including type III collagen. May also target type VI and type X collagens. This is Peptidyl-prolyl cis-trans isomerase FKBP14 (Fkbp14) from Mus musculus (Mouse).